The sequence spans 177 residues: Inner membrane-spanning protein YciB (177 aa).

5 helical membrane-spanning segments follow: residues 22 to 42 (IFIA…IHWI), 50 to 70 (ISLF…FFHN), 76 to 96 (WKIT…QFFT), 121 to 141 (FIWS…AYYF), and 149 to 169 (FKVF…SIYI).

Belongs to the YciB family.

It is found in the cell inner membrane. Functionally, plays a role in cell envelope biogenesis, maintenance of cell envelope integrity and membrane homeostasis. The chain is Inner membrane-spanning protein YciB from Buchnera aphidicola subsp. Acyrthosiphon pisum (strain 5A).